The following is a 394-amino-acid chain: 8-amino-7-oxononanoate synthase (394 aa).

Arginine 21 contacts substrate. Position 112-113 (112-113 (GY)) interacts with pyridoxal 5'-phosphate. Histidine 137 is a binding site for substrate. Pyridoxal 5'-phosphate is bound by residues serine 183, histidine 211, and threonine 239. An N6-(pyridoxal phosphate)lysine modification is found at lysine 242. Threonine 358 lines the substrate pocket.

The protein belongs to the class-II pyridoxal-phosphate-dependent aminotransferase family. BioF subfamily. Homodimer. It depends on pyridoxal 5'-phosphate as a cofactor.

The catalysed reaction is 6-carboxyhexanoyl-[ACP] + L-alanine + H(+) = (8S)-8-amino-7-oxononanoate + holo-[ACP] + CO2. Its pathway is cofactor biosynthesis; biotin biosynthesis. In terms of biological role, catalyzes the decarboxylative condensation of pimeloyl-[acyl-carrier protein] and L-alanine to produce 8-amino-7-oxononanoate (AON), [acyl-carrier protein], and carbon dioxide. In Burkholderia cenocepacia (strain ATCC BAA-245 / DSM 16553 / LMG 16656 / NCTC 13227 / J2315 / CF5610) (Burkholderia cepacia (strain J2315)), this protein is 8-amino-7-oxononanoate synthase.